Reading from the N-terminus, the 266-residue chain is Enterotoxin type C-1 (266 aa).

Positions 1-27 are cleaved as a signal peptide; the sequence is MNKSRFISCVILIFALILVLFTPNVLA. An intrachain disulfide couples Cys120 to Cys137.

This sequence belongs to the staphylococcal/streptococcal toxin family. Interacts with host MHC class II molecules composed of alpha/HLA-DRA and beta/HLA-DRB1 chains.

It localises to the secreted. Its function is as follows. Staphylococcal enterotoxin that activates the host immune system by binding as unprocessed molecules to major histocompatibility (MHC) complex class II and T-cell receptor (TCR) molecules. In turn, this ternary complex activates a large number of T-lymphocytes initiating a systemic release of pro-inflammatory cytokines. Inhibits SEC1-mediated T-cell activation in the absence of MHC class II by competing with SEC1 for binding to the host TCR. Also causes the intoxication staphylococcal food poisoning syndrome. In Staphylococcus aureus, this protein is Enterotoxin type C-1 (entC1).